A 129-amino-acid polypeptide reads, in one-letter code: Large ribosomal subunit protein bL12 (129 aa).

The protein belongs to the bacterial ribosomal protein bL12 family. In terms of assembly, homodimer. Part of the ribosomal stalk of the 50S ribosomal subunit. Forms a multimeric L10(L12)X complex, where L10 forms an elongated spine to which 2 to 4 L12 dimers bind in a sequential fashion. Binds GTP-bound translation factors.

Forms part of the ribosomal stalk which helps the ribosome interact with GTP-bound translation factors. Is thus essential for accurate translation. This Mycobacteroides abscessus (strain ATCC 19977 / DSM 44196 / CCUG 20993 / CIP 104536 / JCM 13569 / NCTC 13031 / TMC 1543 / L948) (Mycobacterium abscessus) protein is Large ribosomal subunit protein bL12.